A 1207-amino-acid chain; its full sequence is Histidine kinase 1 (1207 aa).

A compositionally biased stretch (polar residues) spans 1–10 (MRGDSFSMSI). The tract at residues 1–20 (MRGDSFSMSIENLPDSPMGS) is disordered. The Cytoplasmic segment spans residues 1–81 (MRGDSFSMSI…SSYYSVFVVR (81 aa)). A helical membrane pass occupies residues 82-102 (LAIMVMLAILIGLLTVLTWHF). The Extracellular segment spans residues 103–446 (TRIYTKQSLQ…GKVDERAFKT (344 aa)). The chain crosses the membrane as a helical span at residues 447 to 467 (LIILISASVCIFFIGCVCILI). The Cytoplasmic portion of the chain corresponds to 468–1207 (LTNGVSKEMK…PSAFQTSLSA (740 aa)). One can recognise a Histidine kinase domain in the interval 505 to 763 (NMSHELRTPM…LMRLYLILST (259 aa)). At H508 the chain carries Phosphohistidine; by autocatalysis. Disordered regions lie at residues 964 to 987 (DTCSSDDSSETSGEKQVDKSVKPS) and 1000 to 1021 (DATTSNDDSTSASMTQKNPEEE). A compositionally biased stretch (basic and acidic residues) spans 975-984 (SGEKQVDKSV). Residues 1000–1014 (DATTSNDDSTSASMT) show a composition bias toward low complexity. The 152-residue stretch at 1045–1196 (RILLAEDTPV…LMVSTILSLT (152 aa)) folds into the Response regulatory domain. At D1127 the chain carries 4-aspartylphosphate.

As to quaternary structure, interacts with AHP2, depending of the phosphorylation state of Asp-1075 in the receiver domain, but probably not with AHP1 and AHP3. Post-translationally, autophosphorylated predominantly on His residues. Activation probably requires a transfer of a phosphate group between a His in the transmitter domain and an Asp of the receiver domain. Mostly expressed in roots, and, to a lower extent, in stems, leaves and flowers.

The protein resides in the cell membrane. It catalyses the reaction ATP + protein L-histidine = ADP + protein N-phospho-L-histidine.. In terms of biological role, functions as an osmosensor histidine kinase that detects water stress and transmits the stress signal to a downstream MAPK cascade. This protein undergoes an ATP-dependent autophosphorylation at a conserved histidine residue in the kinase core, and a phosphoryl group is then transferred to a conserved aspartate residue in the receiver domain. Positive regulator of drought and salt stress responses, and abscisic acid (ABA) signaling. Confers drought tolerance, probably by regulating levels of ABA accumulation. Plays a redundant role in regulating plant growth and development. Required for the regulation of desiccation processes during seed formation. The sequence is that of Histidine kinase 1 (AHK1) from Arabidopsis thaliana (Mouse-ear cress).